The following is a 228-amino-acid chain: HTH-type transcriptional repressor RspR (228 aa).

Residues 11–78 (QPVNQQIYRI…PQRGSYVNKI (68 aa)) enclose the HTH gntR-type domain. The segment at residues 38–57 (EKEVSVRFNVSRQPVREAFI) is a DNA-binding region (H-T-H motif).

Its function is as follows. Repressor of the rspAB operon. Acts by binding directly to the upstream region of rspA. The polypeptide is HTH-type transcriptional repressor RspR (rspR) (Escherichia coli (strain K12)).